A 311-amino-acid chain; its full sequence is Methionyl-tRNA formyltransferase (311 aa).

109-112 (SLLP) contacts (6S)-5,6,7,8-tetrahydrofolate.

It belongs to the Fmt family.

It carries out the reaction L-methionyl-tRNA(fMet) + (6R)-10-formyltetrahydrofolate = N-formyl-L-methionyl-tRNA(fMet) + (6S)-5,6,7,8-tetrahydrofolate + H(+). Its function is as follows. Attaches a formyl group to the free amino group of methionyl-tRNA(fMet). The formyl group appears to play a dual role in the initiator identity of N-formylmethionyl-tRNA by promoting its recognition by IF2 and preventing the misappropriation of this tRNA by the elongation apparatus. This is Methionyl-tRNA formyltransferase from Solibacter usitatus (strain Ellin6076).